The primary structure comprises 400 residues: MAKGVFERTKPHINVGTIGHVDHGKTTLTAAITKVLAKHVPDDPANKEVAFEQIDNAPEERQRGITIATSHQEYATKNRHYAHVDCPGHADYVKNMITGAAQMDGAILVVSAADGPMPQTREHILLARQVGVPYIVVYLNKADMVDDPELLELVEMEVRELLSEYEFPGDEVPVVVGSALKALEGDEGELGEQSILKLLEALDEYIPEPKRDIDKPFLLAVEDVFSIQGRGTVATGRVEQGKLRLNEEVEIVGIRPTRKTVVTGIEMFNKSMQEAQAGDNIGVLLRGIKRDEIERGQVLAAPGSITPHTRFKAEVYVLSKEEGGRHTPFFSHYRPQFYFRTTDVTGEIFLEEGVEMVMPGDNTVMEVQLISPIAMDEGLNFAIREGGRTVGAGVVTQIIE.

Residues 10 to 210 enclose the tr-type G domain; that stretch reads KPHINVGTIG…ALDEYIPEPK (201 aa). Positions 19–26 are G1; that stretch reads GHVDHGKT. 19-26 is a binding site for GTP; the sequence is GHVDHGKT. Residue Thr-26 participates in Mg(2+) binding. A G2 region spans residues 64–68; sequence GITIA. The tract at residues 85–88 is G3; sequence DCPG. Residues 85–89 and 140–143 contribute to the GTP site; these read DCPGH and NKAD. The segment at 140–143 is G4; the sequence is NKAD. Positions 178–180 are G5; that stretch reads SAL.

This sequence belongs to the TRAFAC class translation factor GTPase superfamily. Classic translation factor GTPase family. EF-Tu/EF-1A subfamily. In terms of assembly, monomer.

Its subcellular location is the cytoplasm. The enzyme catalyses GTP + H2O = GDP + phosphate + H(+). Functionally, GTP hydrolase that promotes the GTP-dependent binding of aminoacyl-tRNA to the A-site of ribosomes during protein biosynthesis. The sequence is that of Elongation factor Tu from Rubrobacter xylanophilus (strain DSM 9941 / JCM 11954 / NBRC 16129 / PRD-1).